A 76-amino-acid chain; its full sequence is Transcription attenuation protein MtrB (76 aa).

The protein belongs to the MtrB family. Oligomer of 11 identical subunits arranged in doughnut-like structure.

In terms of biological role, required for transcription attenuation control in the Trp operon. This trans-acting factor seems to recognize a 10 bases nucleotide sequence in the Trp leader transcript causing transcription termination. Binds the leader RNA only in presence of L-tryptophan. The sequence is that of Transcription attenuation protein MtrB (mtrB) from Bacillus pumilus (Bacillus mesentericus).